The following is a 1633-amino-acid chain: Serine-aspartate repeat-containing protein F (1633 aa).

Positions 1–45 (MKKRRQGPINKRVDFLSNKVNKYSIRKFTVGTASILVGATLMFGA) are cleaved as a signal peptide. Residues 46–678 (ADNEAKAAED…GSSTAQGDNP (633 aa)) form a ligand binding A region region. The interval 51–269 (KAAEDNQLES…SISTDSSVND (219 aa)) is disordered. Positions 61–74 (ASKEEQKGSRDNES) are enriched in basic and acidic residues. 2 stretches are compositionally biased toward polar residues: residues 85–99 (GSHS…NNAT) and 146–168 (PKTS…DNLN). Over residues 175–184 (KESKTDEHST) the composition is skewed to basic and acidic residues. Residues 186 to 226 (QAQMSTNKSNLDTNDSPTQSEKTSSQANNDSTDNQSAPSKQ) are compositionally biased toward polar residues. Over residues 227–253 (LDSKPSEQKVYKTKFNDEPTQDVEHTT) the composition is skewed to basic and acidic residues. Polar residues predominate over residues 255 to 266 (KLKTPSISTDSS). CNA-B domains are found at residues 679–797 (TYSL…YLTP), 798–907 (KYNV…FYKP), 908–1018 (IYNL…YKTP), and 1019–1129 (KYSV…FDDD). The tract at residues 679–1129 (TYSLGDYVWL…SIDNGYFDDD (451 aa)) is type I collagen binding region. The interval 862–889 (FETPEGYTPTKQNSGSDEGKDSNGTKTT) is disordered. The tract at residues 1085-1608 (KPEGMTQTTA…ANEDHDSKGT (524 aa)) is disordered. The segment covering 1107-1119 (EDVRVTITDHDDF) has biased composition (basic and acidic residues). Acidic residues predominate over residues 1125-1584 (YFDDDSDSDS…DSDSDSDSDS (460 aa)). Basic and acidic residues predominate over residues 1585 to 1606 (DSDKNAKDKLPDTGANEDHDSK). The LPXTG sorting signal signature appears at 1594–1598 (LPDTG). Thr-1597 bears the Pentaglycyl murein peptidoglycan amidated threonine mark. A propeptide spans 1598-1633 (GANEDHDSKGTLLGTLFAGLGALLLGRRRKKDNKEK) (removed by sortase).

This sequence belongs to the serine-aspartate repeat-containing protein (SDr) family.

The protein resides in the secreted. It is found in the cell wall. Its function is as follows. Binds to type I collagen via alpha-2(I) or alpha-1(I) chains. The sequence is that of Serine-aspartate repeat-containing protein F (sdrF) from Staphylococcus epidermidis (strain ATCC 12228 / FDA PCI 1200).